Consider the following 165-residue polypeptide: MPEHLNARVEACYRQAEHFFQRSFPRPTVSFRLRGQKAGVAHLDENLLRFNPQLYRENREHFLEQTVAHEVAHLIAHQLFGPRIRPHGEEWQLIMRGIYGLPPDRCHTYAVKRRATTRYLYRCHCPEHNEFPFSPQRHTLVAKGRRYYCRRCKATLVFTGEVLRE.

The SprT-like domain occupies E10 to F158. Position 69 (H69) interacts with Zn(2+). E70 is an active-site residue. Zn(2+) is bound at residue H73.

The protein belongs to the SprT family. It depends on Zn(2+) as a cofactor.

The protein localises to the cytoplasm. This chain is Protein SprT, found in Pseudomonas aeruginosa (strain UCBPP-PA14).